The following is an 84-amino-acid chain: Small ribosomal subunit protein eS27 (84 aa).

Basic and acidic residues predominate over residues 1-16 (MPLAKDLLHPTPEEEK). The interval 1 to 23 (MPLAKDLLHPTPEEEKRKHKKKR) is disordered. Residues 37–59 (CPGCYKITTVFSHAQTVVLCVGC) form a C4-type zinc finger.

This sequence belongs to the eukaryotic ribosomal protein eS27 family. As to quaternary structure, component of the small ribosomal subunit. Part of the small subunit (SSU) processome, composed of more than 70 proteins and the RNA chaperone small nucleolar RNA (snoRNA) U3. It depends on Zn(2+) as a cofactor.

Its subcellular location is the cytoplasm. The protein resides in the nucleus. It localises to the nucleolus. In terms of biological role, component of the small ribosomal subunit. The ribosome is a large ribonucleoprotein complex responsible for the synthesis of proteins in the cell. Required for proper rRNA processing and maturation of 18S rRNAs. Part of the small subunit (SSU) processome, first precursor of the small eukaryotic ribosomal subunit. During the assembly of the SSU processome in the nucleolus, many ribosome biogenesis factors, an RNA chaperone and ribosomal proteins associate with the nascent pre-rRNA and work in concert to generate RNA folding, modifications, rearrangements and cleavage as well as targeted degradation of pre-ribosomal RNA by the RNA exosome. The sequence is that of Small ribosomal subunit protein eS27 (rps27) from Xenopus laevis (African clawed frog).